The following is a 372-amino-acid chain: Methenyltetrahydrofolate synthase domain-containing protein (372 aa).

Basic and acidic residues predominate over residues 246 to 258; it reads KQAGKDVTLRDEP. The segment at 246 to 289 is disordered; that stretch reads KQAGKDVTLRDEPGSQQPAPGPIRRPQDRPQTGSRGGSRSPLQG. The region spanning 296-369 is the RRM domain; it reads ATVCVGNLPF…NALRVSLGQQ (74 aa).

This is Methenyltetrahydrofolate synthase domain-containing protein (Mthfsd) from Mus musculus (Mouse).